The chain runs to 361 residues: Tyrosine--tRNA ligase (361 aa).

L-tyrosine is bound by residues Tyr36, Tyr162, Gln166, Asp169, and Gln184. The 'KMSKS' region motif lies at Lys235 to Ser239. Lys238 is a binding site for ATP.

This sequence belongs to the class-I aminoacyl-tRNA synthetase family. TyrS type 4 subfamily. As to quaternary structure, homodimer.

It is found in the cytoplasm. It carries out the reaction tRNA(Tyr) + L-tyrosine + ATP = L-tyrosyl-tRNA(Tyr) + AMP + diphosphate + H(+). Catalyzes the attachment of tyrosine to tRNA(Tyr) in a two-step reaction: tyrosine is first activated by ATP to form Tyr-AMP and then transferred to the acceptor end of tRNA(Tyr). The polypeptide is Tyrosine--tRNA ligase (Sulfolobus acidocaldarius (strain ATCC 33909 / DSM 639 / JCM 8929 / NBRC 15157 / NCIMB 11770)).